The chain runs to 67 residues: DNA-directed RNA polymerase subunit omega (67 aa).

This sequence belongs to the RNA polymerase subunit omega family. The RNAP catalytic core consists of 2 alpha, 1 beta, 1 beta' and 1 omega subunit. When a sigma factor is associated with the core the holoenzyme is formed, which can initiate transcription.

The enzyme catalyses RNA(n) + a ribonucleoside 5'-triphosphate = RNA(n+1) + diphosphate. Promotes RNA polymerase assembly. Latches the N- and C-terminal regions of the beta' subunit thereby facilitating its interaction with the beta and alpha subunits. This chain is DNA-directed RNA polymerase subunit omega, found in Albidiferax ferrireducens (strain ATCC BAA-621 / DSM 15236 / T118) (Rhodoferax ferrireducens).